Consider the following 336-residue polypeptide: tRNA-cytidine(32) 2-sulfurtransferase (336 aa).

Residues 11-23 (TAAAPAGTGEATP) show a composition bias toward low complexity. A disordered region spans residues 11-31 (TAAAPAGTGEATPVHARARSP). The short motif at 75–80 (SGGKDS) is the PP-loop motif element. Positions 150, 153, and 241 each coordinate [4Fe-4S] cluster.

It belongs to the TtcA family. In terms of assembly, homodimer. Mg(2+) serves as cofactor. [4Fe-4S] cluster is required as a cofactor.

It is found in the cytoplasm. The catalysed reaction is cytidine(32) in tRNA + S-sulfanyl-L-cysteinyl-[cysteine desulfurase] + AH2 + ATP = 2-thiocytidine(32) in tRNA + L-cysteinyl-[cysteine desulfurase] + A + AMP + diphosphate + H(+). Its pathway is tRNA modification. In terms of biological role, catalyzes the ATP-dependent 2-thiolation of cytidine in position 32 of tRNA, to form 2-thiocytidine (s(2)C32). The sulfur atoms are provided by the cysteine/cysteine desulfurase (IscS) system. This Paraburkholderia xenovorans (strain LB400) protein is tRNA-cytidine(32) 2-sulfurtransferase.